Here is a 190-residue protein sequence, read N- to C-terminus: DNA dC-&gt;dU-editing enzyme APOBEC-3C (190 aa).

The region spanning 29 to 138 (DRNETWLCFT…PCYQEGLRSL (110 aa)) is the CMP/dCMP-type deaminase domain. The tract at residues 40–86 (EGIKRRSVVSWKTGVFRNQVDSETHCHAERCFLSWFCDDILSPNTKY) is (Microbial infection) Required for interaction with human foamy virus protein Bet. Position 66 (histidine 66) interacts with Zn(2+). The active-site Proton donor is the glutamate 68. Residues cysteine 97 and cysteine 100 each contribute to the Zn(2+) site.

The protein belongs to the cytidine and deoxycytidylate deaminase family. Homodimer. Interacts with TRIB3. Interacts with AGO2. As to quaternary structure, (Microbial infection) Interacts with human foamy virus protein Bet; this interaction does not induce APOBEC3C degradation but prevents its dimerization and incorporation into the virion by binding of Bet close to or within the APOBEC3C dimerization site. In terms of assembly, (Microbial infection) Interacts with HIV-1 Vif. Zn(2+) is required as a cofactor. In terms of tissue distribution, expressed in spleen, testes, peripherical blood lymphocytes, heart, thymus, prostate and ovary.

The protein localises to the nucleus. Its subcellular location is the cytoplasm. The catalysed reaction is a 2'-deoxycytidine in single-stranded DNA + H2O + H(+) = a 2'-deoxyuridine in single-stranded DNA + NH4(+). Its activity is regulated as follows. (Microbial infection) Antiviral activity is neutralized by the HIV-1 virion infectivity factor (Vif), that prevents its incorporation into progeny HIV-1 virions by both inhibiting its translation and/or by inducing its ubiquitination and subsequent degradation by the 26S proteasome. DNA deaminase (cytidine deaminase) which acts as an inhibitor of retrovirus replication and retrotransposon mobility via deaminase-dependent and -independent mechanisms. After the penetration of retroviral nucleocapsids into target cells of infection and the initiation of reverse transcription, it can induce the conversion of cytosine to uracil in the minus-sense single-strand viral DNA, leading to G-to-A hypermutations in the subsequent plus-strand viral DNA. The resultant detrimental levels of mutations in the proviral genome, along with a deamination-independent mechanism that works prior to the proviral integration, together exert efficient antiretroviral effects in infected target cells. Selectively targets single-stranded DNA and does not deaminate double-stranded DNA or single- or double-stranded RNA. Exhibits antiviral activity against simian immunodeficiency virus (SIV), hepatitis B virus (HBV), herpes simplex virus 1 (HHV-1) and Epstein-Barr virus (EBV) and may inhibit the mobility of LTR and non-LTR retrotransposons. May also play a role in the epigenetic regulation of gene expression through the process of active DNA demethylation. The chain is DNA dC-&gt;dU-editing enzyme APOBEC-3C (APOBEC3C) from Homo sapiens (Human).